A 392-amino-acid chain; its full sequence is DNA polymerase IV (392 aa).

The UmuC domain maps to 6–186 (IVHLDADAFF…LPIGKLPGVG (181 aa)). D10 and D103 together coordinate Mg(2+). E104 is an active-site residue.

It belongs to the DNA polymerase type-Y family. In terms of assembly, monomer. The cofactor is Mg(2+).

It is found in the cytoplasm. It carries out the reaction DNA(n) + a 2'-deoxyribonucleoside 5'-triphosphate = DNA(n+1) + diphosphate. Its function is as follows. Poorly processive, error-prone DNA polymerase involved in untargeted mutagenesis. Copies undamaged DNA at stalled replication forks, which arise in vivo from mismatched or misaligned primer ends. These misaligned primers can be extended by PolIV. Exhibits no 3'-5' exonuclease (proofreading) activity. May be involved in translesional synthesis, in conjunction with the beta clamp from PolIII. The sequence is that of DNA polymerase IV from Opitutus terrae (strain DSM 11246 / JCM 15787 / PB90-1).